A 119-amino-acid polypeptide reads, in one-letter code: Ribonuclease P protein component (119 aa).

It belongs to the RnpA family. Consists of a catalytic RNA component (M1 or rnpB) and a protein subunit.

The enzyme catalyses Endonucleolytic cleavage of RNA, removing 5'-extranucleotides from tRNA precursor.. RNaseP catalyzes the removal of the 5'-leader sequence from pre-tRNA to produce the mature 5'-terminus. It can also cleave other RNA substrates such as 4.5S RNA. The protein component plays an auxiliary but essential role in vivo by binding to the 5'-leader sequence and broadening the substrate specificity of the ribozyme. This chain is Ribonuclease P protein component, found in Escherichia coli O6:H1 (strain CFT073 / ATCC 700928 / UPEC).